A 952-amino-acid chain; its full sequence is Eukaryotic translation initiation factor 3 subunit A (952 aa).

In terms of domain architecture, PCI spans 315–491; the sequence is HAERAGIVND…QTITFVSTPP (177 aa). The stretch at 522–849 forms a coiled coil; the sequence is DAFAAAIAQA…RRQAEKAAAT (328 aa). The span at 757-797 shows a compositional bias: basic and acidic residues; sequence EKVIKRKREEKERKLKEAREAEERKRKEEEEAAQKAEEEAR. The segment at 757 to 952 is disordered; that stretch reads EKVIKRKREE…RGMPSTRGGA (196 aa). A compositionally biased stretch (low complexity) spans 798 to 809; that stretch reads AAAALEAEAAAA. Over residues 810 to 844 the composition is skewed to basic and acidic residues; that stretch reads EQRRAEREAQRQSDLERIRAQQEREEEALRRRQAE. Low complexity-rich tracts occupy residues 856–878 and 893–918; these read RPPA…GGPS and GAPV…SNGP.

It belongs to the eIF-3 subunit A family. As to quaternary structure, component of the eukaryotic translation initiation factor 3 (eIF-3) complex.

Its subcellular location is the cytoplasm. Its function is as follows. RNA-binding component of the eukaryotic translation initiation factor 3 (eIF-3) complex, which is involved in protein synthesis of a specialized repertoire of mRNAs and, together with other initiation factors, stimulates binding of mRNA and methionyl-tRNAi to the 40S ribosome. The eIF-3 complex specifically targets and initiates translation of a subset of mRNAs involved in cell proliferation. The sequence is that of Eukaryotic translation initiation factor 3 subunit A from Cryptococcus neoformans var. neoformans serotype D (strain B-3501A) (Filobasidiella neoformans).